The primary structure comprises 360 residues: Heme A synthase (360 aa).

A run of 9 helical transmembrane segments spans residues 29 to 49 (WLFA…ATRL), 111 to 131 (FLGR…WWTG), 139 to 159 (LGLL…WIMV), 175 to 195 (LAAH…LAAG), 210 to 230 (LTAL…GLVA), 242 to 262 (PLMD…TPWI), 269 to 289 (VALV…VAAL), 309 to 329 (AILG…LLAV), and 330 to 350 (PLWA…MAAV). Histidine 276 contributes to the heme binding site. Position 337 (histidine 337) interacts with heme.

This sequence belongs to the COX15/CtaA family. Type 2 subfamily. In terms of assembly, interacts with CtaB. Heme b serves as cofactor.

It localises to the cell membrane. It catalyses the reaction Fe(II)-heme o + 2 A + H2O = Fe(II)-heme a + 2 AH2. It functions in the pathway porphyrin-containing compound metabolism; heme A biosynthesis; heme A from heme O: step 1/1. Its function is as follows. Catalyzes the conversion of heme O to heme A by two successive hydroxylations of the methyl group at C8. The first hydroxylation forms heme I, the second hydroxylation results in an unstable dihydroxymethyl group, which spontaneously dehydrates, resulting in the formyl group of heme A. The chain is Heme A synthase from Methylobacterium nodulans (strain LMG 21967 / CNCM I-2342 / ORS 2060).